Reading from the N-terminus, the 91-residue chain is ATP synthase subunit c (91 aa).

The next 2 helical transmembrane spans lie at 4–24 (LTMCMLAAGFGMAIGAFGTGI) and 53–73 (IGLAMIESLAIYVLVVCLIIL).

This sequence belongs to the ATPase C chain family. F-type ATPases have 2 components, F(1) - the catalytic core - and F(0) - the membrane proton channel. F(1) has five subunits: alpha(3), beta(3), gamma(1), delta(1), epsilon(1). F(0) has three main subunits: a(1), b(2) and c(10-14). The alpha and beta chains form an alternating ring which encloses part of the gamma chain. F(1) is attached to F(0) by a central stalk formed by the gamma and epsilon chains, while a peripheral stalk is formed by the delta and b chains.

The protein resides in the cell inner membrane. Its function is as follows. F(1)F(0) ATP synthase produces ATP from ADP in the presence of a proton or sodium gradient. F-type ATPases consist of two structural domains, F(1) containing the extramembraneous catalytic core and F(0) containing the membrane proton channel, linked together by a central stalk and a peripheral stalk. During catalysis, ATP synthesis in the catalytic domain of F(1) is coupled via a rotary mechanism of the central stalk subunits to proton translocation. Functionally, key component of the F(0) channel; it plays a direct role in translocation across the membrane. A homomeric c-ring of between 10-14 subunits forms the central stalk rotor element with the F(1) delta and epsilon subunits. In Geobacter metallireducens (strain ATCC 53774 / DSM 7210 / GS-15), this protein is ATP synthase subunit c.